The primary structure comprises 320 residues: NAD-dependent protein deacylase SIR2rp2 (320 aa).

A mitochondrion-targeting transit peptide spans 1–22 (MRPAGTLASFLERCSARKRGRG). Residues 23–320 (CVVLTGAGCS…MFFRRKTIQL (298 aa)) enclose the Deacetylase sirtuin-type domain. NAD(+) contacts are provided by residues 28–48 (GAGCSTESGIPDYRGPNGQYH) and 108–111 (QNVD). The active-site Proton acceptor is the H144. Residues C152, C155, C207, and C210 each contribute to the Zn(2+) site. NAD(+)-binding positions include 248 to 250 (GTS), 274 to 276 (NAG), and G294.

The protein belongs to the sirtuin family. Class II subfamily. Requires Zn(2+) as cofactor.

The protein localises to the mitochondrion matrix. It catalyses the reaction N(6)-acetyl-L-lysyl-[protein] + NAD(+) + H2O = 2''-O-acetyl-ADP-D-ribose + nicotinamide + L-lysyl-[protein]. Functionally, NAD-dependent protein deacylase. Catalyzes the NAD-dependent hydrolysis of acyl groups from lysine residues. The sequence is that of NAD-dependent protein deacylase SIR2rp2 (SIR2rp2) from Leishmania major.